A 430-amino-acid polypeptide reads, in one-letter code: Adenylosuccinate synthetase (430 aa).

GTP is bound by residues 12-18 (GDEGKGK) and 40-42 (GHT). Catalysis depends on Asp13, which acts as the Proton acceptor. The Mg(2+) site is built by Asp13 and Gly40. IMP is bound by residues 13-16 (DEGK), 38-41 (NAGH), Thr128, Arg142, Gln223, Thr238, and Arg302. The active-site Proton donor is the His41. 298–304 (TTTGRPR) contacts substrate. Residues Arg304, 330 to 332 (SID), and 413 to 415 (SVG) contribute to the GTP site.

The protein belongs to the adenylosuccinate synthetase family. In terms of assembly, homodimer. Mg(2+) serves as cofactor.

It is found in the cytoplasm. It catalyses the reaction IMP + L-aspartate + GTP = N(6)-(1,2-dicarboxyethyl)-AMP + GDP + phosphate + 2 H(+). It functions in the pathway purine metabolism; AMP biosynthesis via de novo pathway; AMP from IMP: step 1/2. Its function is as follows. Plays an important role in the de novo pathway of purine nucleotide biosynthesis. Catalyzes the first committed step in the biosynthesis of AMP from IMP. The chain is Adenylosuccinate synthetase from Lactococcus lactis subsp. cremoris (strain SK11).